Consider the following 480-residue polypeptide: ATP synthase subunit beta, chloroplastic (480 aa).

Residue 161 to 168 coordinates ATP; that stretch reads GGAGVGKT.

It belongs to the ATPase alpha/beta chains family. In terms of assembly, F-type ATPases have 2 components, CF(1) - the catalytic core - and CF(0) - the membrane proton channel. CF(1) has five subunits: alpha(3), beta(3), gamma(1), delta(1), epsilon(1). CF(0) has four main subunits: a(1), b(1), b'(1) and c(9-12).

Its subcellular location is the plastid. It localises to the chloroplast thylakoid membrane. The enzyme catalyses ATP + H2O + 4 H(+)(in) = ADP + phosphate + 5 H(+)(out). In terms of biological role, produces ATP from ADP in the presence of a proton gradient across the membrane. The catalytic sites are hosted primarily by the beta subunits. This chain is ATP synthase subunit beta, chloroplastic, found in Euglena gracilis.